The primary structure comprises 216 residues: Probable GTP-binding protein EngB (216 aa).

The EngB-type G domain occupies Asp-30–Leu-204. GTP is bound by residues Gly-38 to Ser-45, Gly-64 to Leu-68, Asp-82 to Gly-85, Thr-149 to Asp-152, and Leu-182 to Ala-185. Mg(2+) contacts are provided by Ser-45 and Thr-66.

The protein belongs to the TRAFAC class TrmE-Era-EngA-EngB-Septin-like GTPase superfamily. EngB GTPase family. The cofactor is Mg(2+).

Its function is as follows. Necessary for normal cell division and for the maintenance of normal septation. In Azotobacter vinelandii (strain DJ / ATCC BAA-1303), this protein is Probable GTP-binding protein EngB.